Here is a 465-residue protein sequence, read N- to C-terminus: Asparagine--tRNA ligase (465 aa).

Belongs to the class-II aminoacyl-tRNA synthetase family. In terms of assembly, homodimer.

It localises to the cytoplasm. It catalyses the reaction tRNA(Asn) + L-asparagine + ATP = L-asparaginyl-tRNA(Asn) + AMP + diphosphate + H(+). This Clostridium perfringens (strain ATCC 13124 / DSM 756 / JCM 1290 / NCIMB 6125 / NCTC 8237 / Type A) protein is Asparagine--tRNA ligase.